Reading from the N-terminus, the 278-residue chain is UPF0758 protein BURPS1106A_0984 (278 aa).

The segment at 1–64 (MQYEIVSAGE…ATAAARRGRD (64 aa)) is disordered. The span at 22–59 (AAAPAAPSSAVPSSAALSSAALSSAAQPTGAPPATAAA) shows a compositional bias: low complexity. In terms of domain architecture, MPN spans 156-278 (LVDSPGAVDD…TFSFAQAGWI (123 aa)). Zn(2+) contacts are provided by His227, His229, and Asp240. The JAMM motif motif lies at 227–240 (HNHPSGAVRPSAAD).

The protein belongs to the UPF0758 family.

This Burkholderia pseudomallei (strain 1106a) protein is UPF0758 protein BURPS1106A_0984.